Here is a 493-residue protein sequence, read N- to C-terminus: Ectonucleotide pyrophosphatase/phosphodiesterase 2 (493 aa).

Topologically, residues Met1–His28 are cytoplasmic. Residues Phe29–Leu45 form a helical; Signal-anchor for type II membrane protein membrane-spanning segment. Residues Tyr46–Gln493 lie on the Extracellular side of the membrane. N-linked (GlcNAc...) asparagine glycans are attached at residues Asn62, Asn69, and Asn112. The segment at Thr76–Asn438 is phosphodiesterase. Residue Thr127 is the Nucleophile of the active site. N-linked (GlcNAc...) asparagine glycans are attached at residues Asn153 and Asn441.

This sequence belongs to the nucleotide pyrophosphatase/phosphodiesterase family. In terms of processing, autophosphorylated as part of the catalytic cycle of phosphodiesterase/pyrophosphatase activity.

The protein localises to the membrane. The enzyme catalyses Hydrolytically removes 5'-nucleotides successively from the 3'-hydroxy termini of 3'-hydroxy-terminated oligonucleotides.. It catalyses the reaction a ribonucleoside 5'-triphosphate + H2O = a ribonucleoside 5'-phosphate + diphosphate + H(+). The catalysed reaction is a 2'-deoxyribonucleoside 5'-triphosphate + H2O = a 2'-deoxyribonucleoside 5'-phosphate + diphosphate + H(+). Functionally, mediates extracellular nucleotide derived phosphate hydrolysis along with NPP1 and PHO5. This Saccharomyces cerevisiae (strain ATCC 204508 / S288c) (Baker's yeast) protein is Ectonucleotide pyrophosphatase/phosphodiesterase 2 (NPP2).